We begin with the raw amino-acid sequence, 183 residues long: Probable adenylyl-sulfate kinase (183 aa).

17–24 (GLPGSGKT) contributes to the ATP binding site. The active-site Phosphoserine intermediate is the serine 91.

The protein belongs to the APS kinase family.

The enzyme catalyses adenosine 5'-phosphosulfate + ATP = 3'-phosphoadenylyl sulfate + ADP + H(+). It functions in the pathway sulfur metabolism; hydrogen sulfide biosynthesis; sulfite from sulfate: step 2/3. Functionally, catalyzes the synthesis of activated sulfate. This chain is Probable adenylyl-sulfate kinase (cysC), found in Aeropyrum pernix (strain ATCC 700893 / DSM 11879 / JCM 9820 / NBRC 100138 / K1).